The following is a 466-amino-acid chain: Small RNA degrading nuclease 2 (466 aa).

The Exonuclease domain occupies 142 to 298; the sequence is MIAIDCEMVL…HDAEAAMKLV (157 aa). The interval 426-466 is disordered; sequence EENNASSKKRKRENHSKGTRDRRRCKPLSRRKQRSNVKRRR. Basic residues predominate over residues 445 to 466; it reads RDRRRCKPLSRRKQRSNVKRRR.

The protein belongs to the REXO1/REXO3 family.

It is found in the nucleus. Functionally, 3'-5' exonuclease degrading single-stranded small RNAs. The polypeptide is Small RNA degrading nuclease 2 (SDN2) (Arabidopsis thaliana (Mouse-ear cress)).